A 273-amino-acid polypeptide reads, in one-letter code: Pantothenate synthetase (273 aa).

27 to 34 (MGALHEGH) contacts ATP. The Proton donor role is filled by H34. Q58 serves as a coordination point for (R)-pantoate. Residue Q58 coordinates beta-alanine. Residue 144–147 (GKKD) participates in ATP binding. Q150 contributes to the (R)-pantoate binding site. ATP contacts are provided by residues V173 and 181–184 (LSSR).

It belongs to the pantothenate synthetase family. As to quaternary structure, homodimer.

Its subcellular location is the cytoplasm. The enzyme catalyses (R)-pantoate + beta-alanine + ATP = (R)-pantothenate + AMP + diphosphate + H(+). The protein operates within cofactor biosynthesis; (R)-pantothenate biosynthesis; (R)-pantothenate from (R)-pantoate and beta-alanine: step 1/1. Functionally, catalyzes the condensation of pantoate with beta-alanine in an ATP-dependent reaction via a pantoyl-adenylate intermediate. The protein is Pantothenate synthetase of Sulfurimonas denitrificans (strain ATCC 33889 / DSM 1251) (Thiomicrospira denitrificans (strain ATCC 33889 / DSM 1251)).